Consider the following 453-residue polypeptide: UDP-glycosyltransferase 74E2 (453 aa).

The active-site Proton acceptor is the histidine 17. Histidine 17 contributes to the an anthocyanidin binding site. The active-site Charge relay is aspartate 109. UDP-alpha-D-glucose is bound by residues threonine 131, glutamine 334, histidine 349, tryptophan 352, asparagine 353, serine 354, glutamate 357, aspartate 373, and glutamine 374.

It belongs to the UDP-glycosyltransferase family. As to expression, expressed in roots, cotyledons and leaf hydathodes.

It carries out the reaction (indol-3-yl)butanoate + UDP-alpha-D-glucose = 4-(indol-3-yl)butanoyl-beta-D-glucose + UDP. Functionally, glucosyltransferase that acts on the auxin indole-3-butyric acid (IBA). Mediates abiotic stress responses and stress-induced morphological adaptations by regulating auxin homeostasis. Possesses low activity in vitro on jasmonate (JA) and the synthetic auxin analog naphthaleneacetic acid (NAA). This chain is UDP-glycosyltransferase 74E2 (UGT74E2), found in Arabidopsis thaliana (Mouse-ear cress).